The following is a 335-amino-acid chain: Fructokinase-2 (335 aa).

Belongs to the carbohydrate kinase PfkB family. In terms of tissue distribution, expressed in roots, at higher levels in stems, and hardly detectable in leaves.

The enzyme catalyses D-fructose + ATP = D-fructose 6-phosphate + ADP + H(+). It participates in glycan biosynthesis; starch biosynthesis. With respect to regulation, inhibited at high fructose. May play an important role in maintaining the flux of carbon towards starch formation. May also be involved in a sugar-sensing pathway. The protein is Fructokinase-2 (FRK2) of Zea mays (Maize).